We begin with the raw amino-acid sequence, 120 residues long: Large ribosomal subunit protein bL19 (120 aa).

This sequence belongs to the bacterial ribosomal protein bL19 family.

In terms of biological role, this protein is located at the 30S-50S ribosomal subunit interface and may play a role in the structure and function of the aminoacyl-tRNA binding site. In Thermosynechococcus vestitus (strain NIES-2133 / IAM M-273 / BP-1), this protein is Large ribosomal subunit protein bL19.